The sequence spans 149 residues: Calmodulin (149 aa).

EF-hand domains follow at residues Gln8 to Asn43, Pro44 to Asp79, Asp81 to Lys116, and Leu117 to Lys149. Positions 21, 23, 25, 27, 32, 57, 59, 61, 63, 68, 94, 96, 98, 100, 105, 130, 132, 134, 136, and 141 each coordinate Ca(2+).

Belongs to the calmodulin family.

Functionally, calmodulin mediates the control of a large number of enzymes, ion channels and other proteins by Ca(2+). Among the enzymes to be stimulated by the calmodulin-Ca(2+) complex are a number of protein kinases and phosphatases. This is Calmodulin (CMD1) from Candida albicans (Yeast).